An 853-amino-acid chain; its full sequence is Stachyose synthase (853 aa).

Residues 1 to 11 constitute a propeptide that is removed on maturation; it reads MAPPLNSTTSN.

The protein belongs to the glycosyl hydrolases 36 family.

The protein localises to the cytoplasm. It carries out the reaction alpha-D-galactosyl-(1-&gt;3)-1D-myo-inositol + raffinose = stachyose + myo-inositol. The protein operates within glycan metabolism; stachyose biosynthesis; stachyose from raffinose: step 1/1. Functionally, catalyzes stachyose synthesis by transfer of a galactosyl moiety from galactinol to raffinose. Also catalyzes verbascose synthesis by galactosyl transfer from galactinol to stachyose or from one stachyose molecule to another. Oligosaccharides of the raffinose family play a protective role in maturation drying of seeds. They may act as cryoprotectants in frost-hardy plants. The sequence is that of Stachyose synthase (STS1) from Pisum sativum (Garden pea).